The primary structure comprises 464 residues: Soluble pyridine nucleotide transhydrogenase (464 aa).

35–44 (DDRRQVGGNC) contributes to the FAD binding site.

It belongs to the class-I pyridine nucleotide-disulfide oxidoreductase family. It depends on FAD as a cofactor.

Its subcellular location is the cytoplasm. The catalysed reaction is NAD(+) + NADPH = NADH + NADP(+). In terms of biological role, conversion of NADPH, generated by peripheral catabolic pathways, to NADH, which can enter the respiratory chain for energy generation. The polypeptide is Soluble pyridine nucleotide transhydrogenase (Pseudomonas putida (strain ATCC 47054 / DSM 6125 / CFBP 8728 / NCIMB 11950 / KT2440)).